A 119-amino-acid polypeptide reads, in one-letter code: Aspartate 1-decarboxylase (119 aa).

The Schiff-base intermediate with substrate; via pyruvic acid role is filled by S25. S25 carries the post-translational modification Pyruvic acid (Ser). Residue T57 participates in substrate binding. The Proton donor role is filled by Y58. 73–75 is a binding site for substrate; the sequence is GAA.

The protein belongs to the PanD family. As to quaternary structure, heterooctamer of four alpha and four beta subunits. The cofactor is pyruvate. Post-translationally, is synthesized initially as an inactive proenzyme, which is activated by self-cleavage at a specific serine bond to produce a beta-subunit with a hydroxyl group at its C-terminus and an alpha-subunit with a pyruvoyl group at its N-terminus.

It is found in the cytoplasm. The catalysed reaction is L-aspartate + H(+) = beta-alanine + CO2. It functions in the pathway cofactor biosynthesis; (R)-pantothenate biosynthesis; beta-alanine from L-aspartate: step 1/1. In terms of biological role, catalyzes the pyruvoyl-dependent decarboxylation of aspartate to produce beta-alanine. The polypeptide is Aspartate 1-decarboxylase (Thermosipho melanesiensis (strain DSM 12029 / CIP 104789 / BI429)).